Here is a 168-residue protein sequence, read N- to C-terminus: Co-chaperone protein HscB homolog (168 aa).

The 73-residue stretch at 5 to 77 (DYFSLFGLPS…MLRARYLCES (73 aa)) folds into the J domain.

This sequence belongs to the HscB family. Interacts with HscA and stimulates its ATPase activity.

Co-chaperone involved in the maturation of iron-sulfur cluster-containing proteins. Seems to help targeting proteins to be folded toward HscA. This is Co-chaperone protein HscB homolog from Bordetella avium (strain 197N).